A 505-amino-acid chain; its full sequence is uncharacterized protein (505 aa).

Polar residues predominate over residues 1-16; it reads MPPTASLTRSPPTASQ. The disordered stretch occupies residues 1–474; it reads MPPTASLTRS…TPPTASLTRT (474 aa). Low complexity-rich tracts occupy residues 17–33 and 40–59; these read TRTL…PRAS and TASL…PPRA. Residues 66 to 78 are compositionally biased toward polar residues; the sequence is SRASLTRTLSRAS. Composition is skewed to low complexity over residues 96-122, 129-140, and 147-158; these read SLTR…PPRT, PRTSQTRTPPRA, and SRASRTRTPPRA. Polar residues-rich tracts occupy residues 165 to 177 and 188 to 200; these read SRAS…SRAS and TRTP…TRTP. Positions 201-226 are enriched in low complexity; the sequence is PTASLTRASRTRTPPRTSQTRTPPRA. Polar residues-rich tracts occupy residues 233 to 254, 265 to 293, 309 to 329, 345 to 365, 373 to 383, 399 to 408, and 435 to 448; these read SRAS…SRAS, TRTP…SLTR, LTRT…SLTR, TRTPSRASLTR, LTRSPPTASL, and LTRS…TRTP. Residues 453 to 474 are compositionally biased toward low complexity; that stretch reads LRRTPPRTSLTRTPPTASLTRT.

This is an uncharacterized protein from Homo sapiens (Human).